The primary structure comprises 184 residues: ATP synthase subunit b, chloroplastic (184 aa).

A helical membrane pass occupies residues 27-49 (LATNPINLSVVLGVLIFFGKGVL).

Belongs to the ATPase B chain family. F-type ATPases have 2 components, F(1) - the catalytic core - and F(0) - the membrane proton channel. F(1) has five subunits: alpha(3), beta(3), gamma(1), delta(1), epsilon(1). F(0) has four main subunits: a(1), b(1), b'(1) and c(10-14). The alpha and beta chains form an alternating ring which encloses part of the gamma chain. F(1) is attached to F(0) by a central stalk formed by the gamma and epsilon chains, while a peripheral stalk is formed by the delta, b and b' chains.

It is found in the plastid. It localises to the chloroplast thylakoid membrane. Its function is as follows. F(1)F(0) ATP synthase produces ATP from ADP in the presence of a proton or sodium gradient. F-type ATPases consist of two structural domains, F(1) containing the extramembraneous catalytic core and F(0) containing the membrane proton channel, linked together by a central stalk and a peripheral stalk. During catalysis, ATP synthesis in the catalytic domain of F(1) is coupled via a rotary mechanism of the central stalk subunits to proton translocation. In terms of biological role, component of the F(0) channel, it forms part of the peripheral stalk, linking F(1) to F(0). This Cucumis sativus (Cucumber) protein is ATP synthase subunit b, chloroplastic.